The sequence spans 193 residues: Probable DNA-directed RNA polymerase subunit delta (193 aa).

An HTH HARE-type domain is found at 14-81; the sequence is LALVEIATAI…GNNEWGLRAW (68 aa). 2 stretches are compositionally biased toward acidic residues: residues 119-174 and 182-193; these read DDDV…DDNL and DLDDLSDGDIEK. The interval 119–193 is disordered; that stretch reads DDDVIDYNDD…DDLSDGDIEK (75 aa).

The protein belongs to the RpoE family. RNAP is composed of a core of 2 alpha, a beta and a beta' subunits. The core is associated with a delta subunit and one of several sigma factors.

Functionally, participates in both the initiation and recycling phases of transcription. In the presence of the delta subunit, RNAP displays an increased specificity of transcription, a decreased affinity for nucleic acids, and an increased efficiency of RNA synthesis because of enhanced recycling. In Leuconostoc citreum (strain KM20), this protein is Probable DNA-directed RNA polymerase subunit delta.